Reading from the N-terminus, the 465-residue chain is Zinc finger CCCH domain-containing protein 58 (465 aa).

The disordered stretch occupies residues 1–26 (MERYGGAGEDESRSDPSHEWSAQGTE). C3H1-type zinc fingers lie at residues 51–79 (RPDE…HPRN), 97–125 (RMGQ…HPRQ), and 145–173 (RPGE…HPVP). Disordered stretches follow at residues 173 to 200 (PPGV…LQSQ) and 274 to 302 (LSPS…QRPE). Low complexity predominate over residues 177-191 (QAPSQQQQQQLSAGP). Residues 283–298 (SGPSSTGVSNKEQTFP) show a composition bias toward polar residues. C3H1-type zinc fingers lie at residues 300 to 328 (RPEQ…HPME) and 345 to 373 (RPGA…HSLG). A compositionally biased stretch (low complexity) spans 397–431 (SLGTLAPSSSSDQCTELISSSSIEPITTTTGGSET). The tract at residues 397–465 (SLGTLAPSSS…SASNEAKTSS (69 aa)) is disordered. The span at 444 to 453 (SHPEPAETNK) shows a compositional bias: basic and acidic residues. Residues 454 to 465 (GDSASNEAKTSS) show a composition bias toward polar residues.

It localises to the nucleus. The polypeptide is Zinc finger CCCH domain-containing protein 58 (Arabidopsis thaliana (Mouse-ear cress)).